The chain runs to 149 residues: Nucleoside diphosphate kinase (149 aa).

The ATP site is built by Lys9, Phe57, Arg85, Thr91, Arg102, and Asn112. Residue His115 is the Pros-phosphohistidine intermediate of the active site.

It belongs to the NDK family. Mg(2+) is required as a cofactor.

The protein localises to the cytoplasm. It catalyses the reaction a 2'-deoxyribonucleoside 5'-diphosphate + ATP = a 2'-deoxyribonucleoside 5'-triphosphate + ADP. The enzyme catalyses a ribonucleoside 5'-diphosphate + ATP = a ribonucleoside 5'-triphosphate + ADP. In terms of biological role, major role in the synthesis of nucleoside triphosphates other than ATP. The ATP gamma phosphate is transferred to the NDP beta phosphate via a ping-pong mechanism, using a phosphorylated active-site intermediate. The chain is Nucleoside diphosphate kinase from Methanoculleus marisnigri (strain ATCC 35101 / DSM 1498 / JR1).